Consider the following 192-residue polypeptide: 7-methyl-GTP pyrophosphatase (192 aa).

Catalysis depends on Asp-69, which acts as the Proton acceptor.

The protein belongs to the Maf family. YceF subfamily. The cofactor is a divalent metal cation.

The protein resides in the cytoplasm. It carries out the reaction N(7)-methyl-GTP + H2O = N(7)-methyl-GMP + diphosphate + H(+). Its function is as follows. Nucleoside triphosphate pyrophosphatase that hydrolyzes 7-methyl-GTP (m(7)GTP). May have a dual role in cell division arrest and in preventing the incorporation of modified nucleotides into cellular nucleic acids. The chain is 7-methyl-GTP pyrophosphatase from Pseudomonas aeruginosa (strain ATCC 15692 / DSM 22644 / CIP 104116 / JCM 14847 / LMG 12228 / 1C / PRS 101 / PAO1).